The sequence spans 136 residues: Acyl carrier protein 1, chloroplastic (136 aa).

The transit peptide at 1 to 52 (MASVTGTSISMASFKASLAPSRVSNLRSVSLPIKGKSFAPLRMRSARFVVCC) directs the protein to the chloroplast. One can recognise a Carrier domain in the interval 56–131 (PETVEKVCAI…DAADLIEKLI (76 aa)). S91 bears the O-(pantetheine 4'-phosphoryl)serine mark.

It belongs to the acyl carrier protein (ACP) family. 4'-phosphopantetheine is transferred from CoA to a specific serine of apo-ACP by acpS. This modification is essential for activity because fatty acids are bound in thioester linkage to the sulfhydryl of the prosthetic group.

The protein resides in the plastid. It is found in the chloroplast. It participates in lipid metabolism; fatty acid biosynthesis. Its function is as follows. Carrier of the growing fatty acid chain in fatty acid biosynthesis. This Casuarina glauca (Swamp oak) protein is Acyl carrier protein 1, chloroplastic (ACP1).